Here is a 72-residue protein sequence, read N- to C-terminus: Exodeoxyribonuclease 7 small subunit (72 aa).

It belongs to the XseB family. As to quaternary structure, heterooligomer composed of large and small subunits.

It is found in the cytoplasm. The enzyme catalyses Exonucleolytic cleavage in either 5'- to 3'- or 3'- to 5'-direction to yield nucleoside 5'-phosphates.. Bidirectionally degrades single-stranded DNA into large acid-insoluble oligonucleotides, which are then degraded further into small acid-soluble oligonucleotides. This is Exodeoxyribonuclease 7 small subunit from Chlamydia trachomatis serovar L2 (strain ATCC VR-902B / DSM 19102 / 434/Bu).